The primary structure comprises 448 residues: Beta-alanine--pyruvate aminotransferase (448 aa).

W61 is a substrate binding site. Residue 120–121 (GS) participates in pyridoxal 5'-phosphate binding. K288 is modified (N6-(pyridoxal phosphate)lysine). Pyridoxal 5'-phosphate is bound at residue T327. Substrate contacts are provided by R414 and Q421.

This sequence belongs to the class-III pyridoxal-phosphate-dependent aminotransferase family. In terms of assembly, homotetramer. Pyridoxal 5'-phosphate serves as cofactor.

The enzyme catalyses 3-oxopropanoate + L-alanine = beta-alanine + pyruvate. With respect to regulation, inhibited by gabaculine (5-amino-1,3-cyclohexadienylcarboxylic acid). In terms of biological role, involved in the degradation of beta-alanine. Catalyzes the transfer of the amino group from beta-alanine to pyruvate to yield L-alanine and 3-oxopropanoate. It can also accept both 4-aminobutyrate and (S)-alpha-methylbenzylamine (MBA) as amino-group donors in the presence of pyruvate as an amine acceptor. In Pseudomonas aeruginosa (strain ATCC 15692 / DSM 22644 / CIP 104116 / JCM 14847 / LMG 12228 / 1C / PRS 101 / PAO1), this protein is Beta-alanine--pyruvate aminotransferase (bauA).